The primary structure comprises 401 residues: Beta-ketoadipyl-CoA thiolase (401 aa).

C91 (acyl-thioester intermediate) is an active-site residue. Active-site proton acceptor residues include H357 and C387.

Belongs to the thiolase-like superfamily. Thiolase family.

It carries out the reaction succinyl-CoA + acetyl-CoA = 3-oxoadipyl-CoA + CoA. Its pathway is aromatic compound metabolism; beta-ketoadipate pathway; acetyl-CoA and succinyl-CoA from 3-oxoadipate: step 2/2. In terms of biological role, catalyzes thiolytic cleavage of beta-ketoadipyl-CoA to succinyl-CoA and acetyl-CoA. This chain is Beta-ketoadipyl-CoA thiolase (pcaF), found in Pseudomonas aeruginosa (strain ATCC 15692 / DSM 22644 / CIP 104116 / JCM 14847 / LMG 12228 / 1C / PRS 101 / PAO1).